A 323-amino-acid polypeptide reads, in one-letter code: MAGRAVVKGVGHYLPERVVPNAAFEKTLDTTDEWIRSRSGIERRHFAAEGETTSDLATRAAEAALADAGISAEQIDAIVLATSTADLTFPSAATMVQARLGMTNGYAFDVQAVCAGFVYALSNANALIVSGQAKRVLVIGAETFSRIMDWTDRSTCVLFGDGAGALVLEYEEGEGTPQDRGILSVDLNSDGRYKDLLYVDGGVSTQTTGHLRMQGNQVFRHAVEKLAQTAETALDKAGLSSADVDWIVPHQANIRIIQGTAKKMGLPMDKVVVTVQDHGNTSAASIPLALSVGKARGQIKTGDLVVTEAIGGGLAWGAVVLRW.

Active-site residues include Cys-114 and His-250. Positions Gln-251–Arg-255 are ACP-binding. Residue Asn-280 is part of the active site.

It belongs to the thiolase-like superfamily. FabH family. As to quaternary structure, homodimer.

Its subcellular location is the cytoplasm. The enzyme catalyses malonyl-[ACP] + acetyl-CoA + H(+) = 3-oxobutanoyl-[ACP] + CO2 + CoA. The protein operates within lipid metabolism; fatty acid biosynthesis. Catalyzes the condensation reaction of fatty acid synthesis by the addition to an acyl acceptor of two carbons from malonyl-ACP. Catalyzes the first condensation reaction which initiates fatty acid synthesis and may therefore play a role in governing the total rate of fatty acid production. Possesses both acetoacetyl-ACP synthase and acetyl transacylase activities. Its substrate specificity determines the biosynthesis of branched-chain and/or straight-chain of fatty acids. The protein is Beta-ketoacyl-[acyl-carrier-protein] synthase III of Ruegeria pomeroyi (strain ATCC 700808 / DSM 15171 / DSS-3) (Silicibacter pomeroyi).